Reading from the N-terminus, the 517-residue chain is C-22 sterol desaturase ERG5 (517 aa).

A helical membrane pass occupies residues 21 to 41; it reads LAVAKATGSPITTLFTIIFLI. C458 is a binding site for heme.

It belongs to the cytochrome P450 family. Heme is required as a cofactor.

The protein resides in the endoplasmic reticulum membrane. It carries out the reaction 5-dehydroepisterol + NADPH + O2 + H(+) = ergosta-5,7,22,24(28)-tetraen-3beta-ol + NADP(+) + 2 H2O. It participates in steroid metabolism; ergosterol biosynthesis; ergosterol from zymosterol: step 4/5. In terms of biological role, C-22 sterol desaturase; part of the third module of ergosterol biosynthesis pathway that includes the late steps of the pathway. ERG5 converts 5-dehydroepisterol into ergosta-5,7,22,24(28)-tetraen-3beta-ol by forming the C-22(23) double bond in the sterol side chain. The third module or late pathway involves the ergosterol synthesis itself through consecutive reactions that mainly occur in the endoplasmic reticulum (ER) membrane. Firstly, the squalene synthase ERG9 catalyzes the condensation of 2 farnesyl pyrophosphate moieties to form squalene, which is the precursor of all steroids. Squalene synthase is crucial for balancing the incorporation of farnesyl diphosphate (FPP) into sterol and nonsterol isoprene synthesis. Secondly, the squalene epoxidase ERG1 catalyzes the stereospecific oxidation of squalene to (S)-2,3-epoxysqualene, which is considered to be a rate-limiting enzyme in steroid biosynthesis. Then, the lanosterol synthase ERG7 catalyzes the cyclization of (S)-2,3 oxidosqualene to lanosterol, a reaction that forms the sterol core. In the next steps, lanosterol is transformed to zymosterol through a complex process involving various demethylation, reduction and desaturation reactions. The lanosterol 14-alpha-demethylase ERG11 (also known as CYP51) catalyzes C14-demethylation of lanosterol to produce 4,4'-dimethyl cholesta-8,14,24-triene-3-beta-ol, which is critical for ergosterol biosynthesis. The C-14 reductase ERG24 reduces the C14=C15 double bond of 4,4-dimethyl-cholesta-8,14,24-trienol to produce 4,4-dimethyl-cholesta-8,24-dienol. 4,4-dimethyl-cholesta-8,24-dienol is substrate of the C-4 demethylation complex ERG25-ERG26-ERG27 in which ERG25 catalyzes the three-step monooxygenation required for the demethylation of 4,4-dimethyl and 4alpha-methylsterols, ERG26 catalyzes the oxidative decarboxylation that results in a reduction of the 3-beta-hydroxy group at the C-3 carbon to an oxo group, and ERG27 is responsible for the reduction of the keto group on the C-3. ERG28 has a role as a scaffold to help anchor ERG25, ERG26 and ERG27 to the endoplasmic reticulum and ERG29 regulates the activity of the iron-containing C4-methylsterol oxidase ERG25. Then, the sterol 24-C-methyltransferase ERG6 catalyzes the methyl transfer from S-adenosyl-methionine to the C-24 of zymosterol to form fecosterol. The C-8 sterol isomerase ERG2 catalyzes the reaction which results in unsaturation at C-7 in the B ring of sterols and thus converts fecosterol to episterol. The sterol-C5-desaturase ERG3 then catalyzes the introduction of a C-5 double bond in the B ring to produce 5-dehydroepisterol. The C-22 sterol desaturase ERG5 further converts 5-dehydroepisterol into ergosta-5,7,22,24(28)-tetraen-3beta-ol by forming the C-22(23) double bond in the sterol side chain. Finally, ergosta-5,7,22,24(28)-tetraen-3beta-ol is substrate of the C-24(28) sterol reductase ERG4 to produce ergosterol. The chain is C-22 sterol desaturase ERG5 from Candida albicans (strain SC5314 / ATCC MYA-2876) (Yeast).